Consider the following 467-residue polypeptide: Uronate isomerase (467 aa).

Belongs to the metallo-dependent hydrolases superfamily. Uronate isomerase family.

It catalyses the reaction D-glucuronate = D-fructuronate. The enzyme catalyses aldehydo-D-galacturonate = keto-D-tagaturonate. It functions in the pathway carbohydrate metabolism; pentose and glucuronate interconversion. The polypeptide is Uronate isomerase (Haemophilus influenzae (strain 86-028NP)).